A 74-amino-acid chain; its full sequence is Lambda-hexatoxin-Hv1e (74 aa).

Positions 1-22 are cleaved as a signal peptide; the sequence is MNTATCFIVLLVVATVIGGIEA. Positions 23 to 35 are excised as a propeptide; it reads GEFDMRKDVMGLF. 4 disulfide bridges follow: cysteine 40/cysteine 54, cysteine 47/cysteine 59, cysteine 50/cysteine 51, and cysteine 53/cysteine 69.

This sequence belongs to the neurotoxin 11 (kappa toxin) family. In terms of tissue distribution, expressed by the venom gland.

It is found in the secreted. In terms of biological role, this excitatory toxin inhibits insect calcium-activated potassium (KCa) channels (Slo-type). In Hadronyche versuta (Blue mountains funnel-web spider), this protein is Lambda-hexatoxin-Hv1e.